Here is a 424-residue protein sequence, read N- to C-terminus: Protein shisa-9 (424 aa).

The signal sequence occupies residues 1 to 23; that stretch reads MRRVLRLLLGCFLTELCARMCRA. Residues 24–149 are Extracellular-facing; sequence QERSGHGQLA…DPLHDPTKDK (126 aa). Residues Asn-45, Asn-89, and Asn-116 are each glycosylated (N-linked (GlcNAc...) asparagine). A helical membrane pass occupies residues 150 to 170; that stretch reads TNLIVYIICGVVAVMVLVGIF. Residues 171-424 are Cytoplasmic-facing; the sequence is TKLGLEKAHR…ITNSKTEVTV (254 aa). Disordered regions lie at residues 333–373 and 389–424; these read PRAF…TWDP and LGIAESGSCDPLGTRTQHFPPTQPYFITNSKTEVTV. 2 stretches are compositionally biased toward polar residues: residues 362-373 and 402-424; these read YNSTANFKTWDP and TRTQHFPPTQPYFITNSKTEVTV.

This sequence belongs to the shisa family. SHISA9 subfamily. As to quaternary structure, component of some AMPA receptors (ionotropic glutamate receptors) complex, at least composed of some AMPA receptor (GRIA1, GRIA2 and/or GRIA3), CACNG2 and SHISA9, as well as low level of DLG4. As to expression, brain-specific. Mainly expressed in neurons, including in hippocampus, cerebral cortex, striatum, thalamus, olfactory bulb and cerebellum. Expressed in most brain structures during embryonic and postnatal development.

It is found in the cell projection. It localises to the dendritic spine membrane. Its subcellular location is the synapse. Regulator of short-term neuronal synaptic plasticity in the dentate gyrus. Associates with AMPA receptors (ionotropic glutamate receptors) in synaptic spines and promotes AMPA receptor desensitization at excitatory synapses. The polypeptide is Protein shisa-9 (Shisa9) (Mus musculus (Mouse)).